Reading from the N-terminus, the 376-residue chain is Transcription factor Sp6 (376 aa).

Positions methionine 1 to proline 70 are disordered. A 9aaTAD motif is present at residues glycine 118–glycine 126. The interval proline 164 to glycine 224 is disordered. C2H2-type zinc fingers lie at residues histidine 254–histidine 278, phenylalanine 284–histidine 308, and phenylalanine 314–histidine 336. Residues lysine 334–alanine 343 show a composition bias toward basic and acidic residues. The tract at residues lysine 334–asparagine 376 is disordered. The segment covering alanine 344–proline 360 has biased composition (low complexity).

The protein belongs to the Sp1 C2H2-type zinc-finger protein family. Ubiquitous. Preferentially expressed by proliferating epithelial cells of teeth, hair follicles and limbs.

The protein localises to the nucleus. In terms of biological role, promotes cell proliferation. Plays a role in tooth germ growth. Plays a role in the control of enamel mineralization. Binds the AMBN promoter. This is Transcription factor Sp6 (Sp6) from Mus musculus (Mouse).